The chain runs to 370 residues: Proto-oncogene Wnt-1 (370 aa).

A signal peptide spans 1–27; that stretch reads MGLWALLPGWVSATLLLALAALPAALA. N-linked (GlcNAc...) asparagine glycosylation is present at asparagine 29. 11 disulfide bridges follow: cysteine 93–cysteine 104, cysteine 143–cysteine 151, cysteine 153–cysteine 170, cysteine 218–cysteine 232, cysteine 220–cysteine 227, cysteine 299–cysteine 330, cysteine 315–cysteine 325, cysteine 329–cysteine 369, cysteine 345–cysteine 360, cysteine 347–cysteine 357, and cysteine 352–cysteine 353. A lipid anchor (O-palmitoleoyl serine; by PORCN) is attached at serine 224. Asparagine 316 and asparagine 346 each carry an N-linked (GlcNAc...) asparagine glycan. N-linked (GlcNAc...) asparagine glycosylation is present at asparagine 359.

It belongs to the Wnt family. Forms a soluble 1:1 complex with AFM; this prevents oligomerization and is required for prolonged biological activity. The complex with AFM may represent the physiological form in body fluids. Interacts with PORCN. Interacts with RSPO1, RSPO2 and RSPO3. Interacts with WLS. In terms of processing, palmitoleoylation is required for efficient binding to frizzled receptors. Palmitoleoylation is necessary for proper trafficking to cell surface. Depalmitoleoylated by NOTUM, leading to inhibit Wnt signaling pathway.

It is found in the secreted. The protein localises to the extracellular space. It localises to the extracellular matrix. Ligand for members of the frizzled family of seven transmembrane receptors. Acts in the canonical Wnt signaling pathway by promoting beta-catenin-dependent transcriptional activation. In some developmental processes, is also a ligand for the coreceptor RYK, thus triggering Wnt signaling. Plays an essential role in the development of the embryonic brain and central nervous system (CNS). Has a role in osteoblast function, bone development and bone homeostasis. This is Proto-oncogene Wnt-1 (WNT1) from Homo sapiens (Human).